Consider the following 147-residue polypeptide: Large ribosomal subunit protein uL23A (147 aa).

Residues 1–10 (MAPSAPAKTA) show a composition bias toward low complexity. Positions 1–29 (MAPSAPAKTAKALDAKKKVVKGKRTTHRR) are disordered. Over residues 18–29 (KVVKGKRTTHRR) the composition is skewed to basic residues.

This sequence belongs to the universal ribosomal protein uL23 family.

This protein binds to a specific region on the 26S rRNA. This Caenorhabditis elegans protein is Large ribosomal subunit protein uL23A.